Reading from the N-terminus, the 112-residue chain is Photosystem II reaction center Psb28 protein (112 aa).

It belongs to the Psb28 family. In terms of assembly, part of the photosystem II complex.

It is found in the cellular thylakoid membrane. The protein is Photosystem II reaction center Psb28 protein of Microcystis aeruginosa (strain NIES-843 / IAM M-2473).